The primary structure comprises 1720 residues: 182 kDa tankyrase-1-binding protein (1720 aa).

Residues 1–137 are disordered; it reads MKGSTLREGT…PPLTPPARCA (137 aa). Residue serine 14 is modified to Phosphoserine. Positions 117 to 127 are enriched in basic and acidic residues; the sequence is SGKEDAGKEDL. Phosphothreonine is present on threonine 131. Serine 178 and serine 220 each carry phosphoserine. 2 disordered regions span residues 185–472 and 485–595; these read SRLT…ESNW and RPSG…EDQE. The acidic stretch occupies residues 209 to 1563; the sequence is EEDSKSPAKG…TEILDSAMYR (1355 aa). Residues 232-243 show a composition bias toward basic and acidic residues; sequence QEEHSKTPEERN. Residue threonine 238 is modified to Phosphothreonine. Residues 266–287 show a composition bias toward polar residues; sequence VSKTWVTSSADPVSEHGGSTSA. Serine 286 and serine 300 each carry phosphoserine. The segment covering 296 to 316 has biased composition (low complexity); the sequence is PASESPRLSSRPSSPCHSQLS. The span at 317–327 shows a compositional bias: polar residues; sequence ETQSPAASEAS. Phosphoserine occurs at positions 429 and 437. A compositionally biased stretch (polar residues) spans 449-459; the sequence is TLPQGQGSQSA. Residues serine 496 and serine 500 each carry the phosphoserine modification. Residues 502–518 are compositionally biased toward low complexity; the sequence is ITEASEAAEAAEADSWA. Residues threonine 503 and threonine 533 each carry the phosphothreonine modification. Phosphoserine is present on residues serine 539, serine 568, serine 602, serine 673, serine 692, and serine 713. Disordered regions lie at residues 659 to 720, 734 to 924, and 955 to 1081; these read TTLP…CSEG, GVAT…EFEK, and SGGG…GWAG. Over residues 742–758 the composition is skewed to low complexity; that stretch reads SSFGSSSWSQDTSQNYS. Phosphoserine is present on residues serine 763, serine 796, serine 807, serine 845, serine 866, serine 871, serine 876, serine 887, serine 912, serine 976, serine 980, serine 1006, serine 1017, and serine 1022. Basic and acidic residues predominate over residues 840 to 866; the sequence is FGKRESQDPHSIHDKELQDQEFGKRDS. Residues 991-1014 are compositionally biased toward basic and acidic residues; the sequence is FEKKTPVGEDRFCEASRDVGHLEE. Residues 1027–1039 show a composition bias toward basic and acidic residues; it reads HSRDGAARPKDEG. 10 positions are modified to phosphoserine: serine 1047, serine 1063, serine 1084, serine 1096, serine 1126, serine 1131, serine 1171, serine 1212, serine 1241, and serine 1246. Positions 1128–1153 are disordered; sequence AGLSPSRKSGGGHFVPPGETKAGAVD. The interval 1198-1255 is disordered; it reads LARRLGTGESEEPRSLGVGEKDWTSSVEARNRDLPGQAEVGRHSQARESGVGEPDWSG. Positions 1208-1230 are enriched in basic and acidic residues; the sequence is EEPRSLGVGEKDWTSSVEARNRD. Phosphothreonine is present on threonine 1275. Serine 1290, serine 1321, serine 1324, serine 1373, and serine 1375 each carry phosphoserine. Residues 1358–1546 are disordered; the sequence is GRVGPDLELD…RGLLPSCPSE (189 aa). A compositionally biased stretch (polar residues) spans 1402–1411; sequence EDSSSPSFET. Residues serine 1425, serine 1429, serine 1437, serine 1440, serine 1442, serine 1463, and serine 1466 each carry the phosphoserine modification. The span at 1428–1457 shows a compositional bias: polar residues; sequence ASPSSCLTRSPPSGSQSLLEGIMTASSSKG. The tankyrase-binding stretch occupies residues 1440–1532; it reads SGSQSLLEGI…QNEQASAPPP (93 aa). The span at 1477–1489 shows a compositional bias: low complexity; that stretch reads LAAGAGQGEPQEP. Serine 1496 bears the Phosphoserine mark. Residues 1515 to 1527 are compositionally biased toward polar residues; that stretch reads WSLTGAARQNEQA. Position 1549 is a phosphoserine (serine 1549). Threonine 1554 is modified (phosphothreonine). The interval 1567-1720 is disordered; the sequence is NLGRKRGHRA…QALKLKKKKI (154 aa). Positions 1568–1577 are enriched in basic residues; that stretch reads LGRKRGHRAP. Over residues 1593–1606 the composition is skewed to basic and acidic residues; the sequence is SDTRLFQDSTEPRA. Phosphoserine is present on residues serine 1611, serine 1612, and serine 1622. Residues 1620-1626 carry the Nuclear localization signal motif; it reads PQSRRTR. An N6-methyllysine modification is found at lysine 1635. Serine 1643 and serine 1657 each carry phosphoserine. The span at 1656 to 1670 shows a compositional bias: basic and acidic residues; that stretch reads RSAEEGEVTESKSSQ. Residues 1671-1690 are compositionally biased toward low complexity; the sequence is KESSVQRSKSCKVPGLGKPL. The residue at position 1706 (serine 1706) is a Phosphoserine. Positions 1714 to 1719 match the Nuclear localization signal motif; that stretch reads KLKKKK.

As to quaternary structure, binds to the ANK repeat domain of TNKS1 and TNKS2. In terms of processing, ADP-ribosylated by TNKS1.

It localises to the nucleus. The protein localises to the cytoplasm. The protein resides in the cytoskeleton. Its subcellular location is the chromosome. This Mus musculus (Mouse) protein is 182 kDa tankyrase-1-binding protein (Tnks1bp1).